The following is a 351-amino-acid chain: Trace amine-associated receptor 2 (351 aa).

The Extracellular portion of the chain corresponds to 1–48 (MAVSSEQHELSHFKRTQTKKEKFNCSEYGNRSCPENERSLGVRVAMYS). N-linked (GlcNAc...) asparagine glycans are attached at residues Asn24 and Asn30. 2 cysteine pairs are disulfide-bonded: Cys33–Cys197 and Cys116–Cys201. A helical membrane pass occupies residues 49 to 69 (FMAGSIFITIFGNLAMIISIS). Topologically, residues 70–79 (YFKQLHTPTN) are cytoplasmic. Residues 80 to 100 (FLILSMAITDFLLGFTIMPYS) traverse the membrane as a helical segment. Residues 101 to 118 (MIRSVENCWYFGLTFCKI) are Extracellular-facing. A helical membrane pass occupies residues 119-139 (YYSFDLMLSITSIFHLCSVAI). Residues 140–162 (DRFYAICYPLLYSTKITIPVIKR) are Cytoplasmic-facing. A helical transmembrane segment spans residues 163–183 (LLLLCWSVPGAFAFGVVFSEA). The Extracellular portion of the chain corresponds to 184–207 (YADGIEGYDILVACSSSCPVMFNK). A helical transmembrane segment spans residues 208 to 228 (LWGTTLFMAGFFTPGSMMVGI). The Cytoplasmic segment spans residues 229 to 263 (YGKIFAVSRKHAHAINNLRENQNNQVKKDKKAAKT). The chain crosses the membrane as a helical span at residues 264 to 284 (LGIVIGVFLLCWFPCFFTILL). Residues 285–299 (DPFLNFSTPVVLFDA) are Extracellular-facing. N-linked (GlcNAc...) asparagine glycosylation occurs at Asn289. Residues 300 to 322 (LTWFGYFNSTCNPLIYGFFYPWF) form a helical membrane-spanning segment. Residues 323-351 (RRALKYILLGKIFSSCFHNTILCMQKESE) are Cytoplasmic-facing.

It belongs to the G-protein coupled receptor 1 family. In terms of tissue distribution, not expressed in the pons, thalamus, hypothalamus, hippocampus, caudate, putamen, frontal cortex, basal forebrain, midbrain or liver.

The protein resides in the cell membrane. Its function is as follows. Orphan olfactory receptor specific for trace amines. Trace amine compounds are enriched in animal body fluids and act on trace amine-associated receptors (TAARs) to elicit both intraspecific and interspecific innate behaviors. Ligand-binding causes a conformation change that triggers signaling via the G(s)-class of G-proteins which activate adenylate cyclase. This chain is Trace amine-associated receptor 2, found in Homo sapiens (Human).